The chain runs to 421 residues: uncharacterized protein (421 aa).

Residue K249 is modified to N6-(pyridoxal phosphate)lysine.

It belongs to the class-I pyridoxal-phosphate-dependent aminotransferase family. It depends on pyridoxal 5'-phosphate as a cofactor.

The protein resides in the cytoplasm. This is an uncharacterized protein from Schizosaccharomyces pombe (strain 972 / ATCC 24843) (Fission yeast).